We begin with the raw amino-acid sequence, 118 residues long: Cytochrome b-c1 complex subunit 7 (118 aa).

The segment at 1-32 is igE-binding. Immunodominant epitope; induces specific IgE antibody production in mice. Causes degranulation of rat basophilic leukemia (RBL) cells and the release of beta-hexosaminidase from them; the sequence is MVHLTKTLRFINNPGFRKFYYGLQGYNKYGLY.

The protein belongs to the UQCRB/QCR7 family. In terms of assembly, component of the ubiquinol-cytochrome c oxidoreductase (cytochrome b-c1 complex, complex III, CIII), a multisubunit enzyme composed of 3 respiratory subunits cytochrome b, cytochrome c1 and Rieske protein, 2 core protein subunits, and additional low-molecular weight protein subunits. The complex exists as an obligatory dimer and forms supercomplexes (SCs) in the inner mitochondrial membrane with cytochrome c oxidase (complex IV, CIV).

It is found in the mitochondrion inner membrane. Its function is as follows. Component of the ubiquinol-cytochrome c oxidoreductase, a multisubunit transmembrane complex that is part of the mitochondrial electron transport chain which drives oxidative phosphorylation. The respiratory chain contains 3 multisubunit complexes succinate dehydrogenase (complex II, CII), ubiquinol-cytochrome c oxidoreductase (cytochrome b-c1 complex, complex III, CIII) and cytochrome c oxidase (complex IV, CIV), that cooperate to transfer electrons derived from NADH and succinate to molecular oxygen, creating an electrochemical gradient over the inner membrane that drives transmembrane transport and the ATP synthase. The cytochrome b-c1 complex catalyzes electron transfer from ubiquinol to cytochrome c, linking this redox reaction to translocation of protons across the mitochondrial inner membrane, with protons being carried across the membrane as hydrogens on the quinol. In the process called Q cycle, 2 protons are consumed from the matrix, 4 protons are released into the intermembrane space and 2 electrons are passed to cytochrome c. The protein is Cytochrome b-c1 complex subunit 7 of Dermatophagoides pteronyssinus (European house dust mite).